A 380-amino-acid polypeptide reads, in one-letter code: Cytochrome b (380 aa).

The next 4 membrane-spanning stretches (helical) occupy residues 34-54, 78-99, 114-134, and 179-199; these read FGSLLGICLTTQILTGLLLAA, WLIRNLHANGASFFFICIYMHV, WNTGVILLLTLMATAFVGYVL, and FFTLHFLLPFMIMGLTLIHLT. Heme b is bound by residues His-84 and His-98. 2 residues coordinate heme b: His-183 and His-197. Residue His-202 participates in a ubiquinone binding. 4 consecutive transmembrane segments (helical) span residues 227–247, 289–309, 321–341, and 348–368; these read LKDILGFMLMFLPLMTLALFS, LGGVLALAASMLVLFLAPLLH, LSQLLFWTLTANLLILTWVGS, and FMIIGQLASLTYFTILLILFP.

This sequence belongs to the cytochrome b family. The cytochrome bc1 complex contains 11 subunits: 3 respiratory subunits (MT-CYB, CYC1 and UQCRFS1), 2 core proteins (UQCRC1 and UQCRC2) and 6 low-molecular weight proteins (UQCRH/QCR6, UQCRB/QCR7, UQCRQ/QCR8, UQCR10/QCR9, UQCR11/QCR10 and a cleavage product of UQCRFS1). This cytochrome bc1 complex then forms a dimer. Heme b is required as a cofactor.

Its subcellular location is the mitochondrion inner membrane. Component of the ubiquinol-cytochrome c reductase complex (complex III or cytochrome b-c1 complex) that is part of the mitochondrial respiratory chain. The b-c1 complex mediates electron transfer from ubiquinol to cytochrome c. Contributes to the generation of a proton gradient across the mitochondrial membrane that is then used for ATP synthesis. The polypeptide is Cytochrome b (MT-CYB) (Balearica pavonina (Black crowned-crane)).